The chain runs to 386 residues: Succinyl-diaminopimelate desuccinylase (386 aa).

His-73 is a binding site for Zn(2+). Asp-75 is an active-site residue. Asp-106 contacts Zn(2+). Catalysis depends on Glu-140, which acts as the Proton acceptor. Zn(2+) is bound by residues Glu-141, Glu-169, and His-355.

This sequence belongs to the peptidase M20A family. DapE subfamily. In terms of assembly, homodimer. The cofactor is Zn(2+). Requires Co(2+) as cofactor.

The enzyme catalyses N-succinyl-(2S,6S)-2,6-diaminopimelate + H2O = (2S,6S)-2,6-diaminopimelate + succinate. Its pathway is amino-acid biosynthesis; L-lysine biosynthesis via DAP pathway; LL-2,6-diaminopimelate from (S)-tetrahydrodipicolinate (succinylase route): step 3/3. Catalyzes the hydrolysis of N-succinyl-L,L-diaminopimelic acid (SDAP), forming succinate and LL-2,6-diaminopimelate (DAP), an intermediate involved in the bacterial biosynthesis of lysine and meso-diaminopimelic acid, an essential component of bacterial cell walls. In Delftia acidovorans (strain DSM 14801 / SPH-1), this protein is Succinyl-diaminopimelate desuccinylase.